A 134-amino-acid chain; its full sequence is Profilin-4 (134 aa).

The cysteines at positions 13 and 118 are disulfide-linked. Positions Ala-84–Thr-100 match the Involved in PIP2 interaction motif. Thr-114 carries the post-translational modification Phosphothreonine.

The protein belongs to the profilin family. As to quaternary structure, occurs in many kinds of cells as a complex with monomeric actin in a 1:1 ratio. Phosphorylated by MAP kinases.

The protein localises to the cytoplasm. The protein resides in the cytoskeleton. Functionally, binds to actin and affects the structure of the cytoskeleton. At high concentrations, profilin prevents the polymerization of actin, whereas it enhances it at low concentrations. The chain is Profilin-4 from Olea europaea (Common olive).